The chain runs to 307 residues: Isethionate sulfite-lyase activating enzyme (307 aa).

A Radical SAM core domain is found at 22–307; sequence HDGPGIRTVV…EAVVAQTADS (286 aa). [4Fe-4S] cluster-binding residues include cysteine 36, cysteine 40, cysteine 43, cysteine 62, cysteine 68, cysteine 71, cysteine 75, cysteine 95, cysteine 98, cysteine 102, and cysteine 106. An S-adenosyl-L-methionine-binding site is contributed by 42–44; the sequence is WCS. 2 4Fe-4S ferredoxin-type domains span residues 53-85 and 86-117; these read VELAYNTGRCLTLAKCVRCVEICTAGAISRAED and DTISIDRALCNDCEQLCSGACPSNALITYGAH. S-adenosyl-L-methionine contacts are provided by residues glycine 146, 195–197, and histidine 268; that span reads DIK.

The protein belongs to the organic radical-activating enzymes family. As to quaternary structure, monomer. [4Fe-4S] cluster serves as cofactor.

The catalysed reaction is glycyl-[protein] + reduced [flavodoxin] + S-adenosyl-L-methionine = glycin-2-yl radical-[protein] + semiquinone [flavodoxin] + 5'-deoxyadenosine + L-methionine + H(+). It functions in the pathway organosulfur degradation; alkanesulfonate degradation. Involved in an anaerobic respiration pathway that converts the sulfonate isethionate (2-hydroxyethanesulfonate) to ammonia, acetate and sulfide. Catalyzes activation of the isethionate sulfite-lyase IseG under anaerobic conditions by generation of an organic free radical on a glycine residue, via a homolytic cleavage of S-adenosyl-L-methionine (SAM). The protein is Isethionate sulfite-lyase activating enzyme of Nitratidesulfovibrio vulgaris (strain ATCC 29579 / DSM 644 / CCUG 34227 / NCIMB 8303 / VKM B-1760 / Hildenborough) (Desulfovibrio vulgaris).